The following is a 353-amino-acid chain: MTAILERRESESLWGRFCNWITSTENRLYIGWFGVLMIPTLLTATSVFIIAFIAAPPVDIDGIREPVSGSLLYGNNIVSGAIIPTSAAIGLHFYPIWEAASVDEWLYNGGPYELIVLHFLLGVACYMGREWELSFRLGMRPWIAVAYSAPVAAATAVFLIYPIGQGSFSDGMPLGISGTFNFMIVFQAEHNILMHPFHMLGVAGVFGGSLFSAMHGSLVTSSLIRETTENESANEGYRFGQEEETYNIVAAHGYFGRLIFQYASFNNSRSLHFFLAAWPVVGIWFTALGISTMAFNLNGFNFNQSVVDSQGRVINTWADIINRANLGMEVMHERNAHNFPLDLAAIEAPATNG.

The residue at position 2 (Thr2) is an N-acetylthreonine. Thr2 is subject to Phosphothreonine. 3 consecutive transmembrane segments (helical) span residues 29–46, 118–133, and 142–156; these read YIGW…TATS, HFLL…EWEL, and WIAV…AATA. His118 serves as a coordination point for chlorophyll a. Tyr126 lines the pheophytin a pocket. Residues Asp170 and Glu189 each contribute to the [CaMn4O5] cluster site. Residues 197 to 218 traverse the membrane as a helical segment; the sequence is FHMLGVAGVFGGSLFSAMHGSL. His198 is a chlorophyll a binding site. Residues His215 and 264–265 each bind a quinone; that span reads SF. His215 lines the Fe cation pocket. His272 is a binding site for Fe cation. The helical transmembrane segment at 274 to 288 threads the bilayer; the sequence is FLAAWPVVGIWFTAL. [CaMn4O5] cluster is bound by residues His332, Glu333, Asp342, and Ala344. The propeptide occupies 345 to 353; sequence AIEAPATNG.

The protein belongs to the reaction center PufL/M/PsbA/D family. As to quaternary structure, PSII is composed of 1 copy each of membrane proteins PsbA, PsbB, PsbC, PsbD, PsbE, PsbF, PsbH, PsbI, PsbJ, PsbK, PsbL, PsbM, PsbT, PsbX, PsbY, PsbZ, Psb30/Ycf12, at least 3 peripheral proteins of the oxygen-evolving complex and a large number of cofactors. It forms dimeric complexes. The D1/D2 heterodimer binds P680, chlorophylls that are the primary electron donor of PSII, and subsequent electron acceptors. It shares a non-heme iron and each subunit binds pheophytin, quinone, additional chlorophylls, carotenoids and lipids. D1 provides most of the ligands for the Mn4-Ca-O5 cluster of the oxygen-evolving complex (OEC). There is also a Cl(-1) ion associated with D1 and D2, which is required for oxygen evolution. The PSII complex binds additional chlorophylls, carotenoids and specific lipids. is required as a cofactor. Post-translationally, tyr-161 forms a radical intermediate that is referred to as redox-active TyrZ, YZ or Y-Z. In terms of processing, C-terminally processed by CTPA; processing is essential to allow assembly of the oxygen-evolving complex and thus photosynthetic growth.

The protein resides in the plastid membrane. It catalyses the reaction 2 a plastoquinone + 4 hnu + 2 H2O = 2 a plastoquinol + O2. In terms of biological role, photosystem II (PSII) is a light-driven water:plastoquinone oxidoreductase that uses light energy to abstract electrons from H(2)O, generating O(2) and a proton gradient subsequently used for ATP formation. It consists of a core antenna complex that captures photons, and an electron transfer chain that converts photonic excitation into a charge separation. The D1/D2 (PsbA/PsbD) reaction center heterodimer binds P680, the primary electron donor of PSII as well as several subsequent electron acceptors. This Cuscuta reflexa (Southern Asian dodder) protein is Photosystem II protein D1.